Here is a 690-residue protein sequence, read N- to C-terminus: Methionine--tRNA ligase (690 aa).

The 'HIGH' region motif lies at 20–30 (PYANGSIHLGH). Positions 151, 154, 164, and 167 each coordinate Zn(2+). The short motif at 337–341 (KMSKS) is the 'KMSKS' region element. Lysine 340 is an ATP binding site. Positions 589–690 (DFAKVDLRIA…EGAQPGMRVM (102 aa)) constitute a tRNA-binding domain.

The protein belongs to the class-I aminoacyl-tRNA synthetase family. MetG type 1 subfamily. As to quaternary structure, homodimer. Requires Zn(2+) as cofactor.

The protein resides in the cytoplasm. The enzyme catalyses tRNA(Met) + L-methionine + ATP = L-methionyl-tRNA(Met) + AMP + diphosphate. Functionally, is required not only for elongation of protein synthesis but also for the initiation of all mRNA translation through initiator tRNA(fMet) aminoacylation. The polypeptide is Methionine--tRNA ligase (Vibrio vulnificus (strain CMCP6)).